The chain runs to 879 residues: Aminopeptidase M1 (879 aa).

The segment at 98 to 205 (HGVGVLKLGF…MSTYLVAIVV (108 aa)) is required for membrane association. Residues glutamate 138 and 271-275 (GAMEN) each bind substrate. Histidine 307 is a binding site for Zn(2+). Glutamate 308 acts as the Proton acceptor in catalysis. Zn(2+)-binding residues include histidine 311 and glutamate 330. Residues 728 to 729 (LL) carry the Dileucine internalization motif motif.

This sequence belongs to the peptidase M1 family. Homodimer. Interacts with N-1-naphthylphthalamic acid (NPA). It depends on Zn(2+) as a cofactor. Ubiquitous with preferential expression in 5 days-old seedlings, roots, young flowers, upper inflorescence stems, and rosette leaves.

It is found in the membrane. Its subcellular location is the microsome membrane. The protein localises to the cytoplasm. It catalyses the reaction Release of an N-terminal amino acid, Xaa-|-Yaa- from a peptide, amide or arylamide. Xaa is preferably Ala, but may be most amino acids including Pro (slow action). When a terminal hydrophobic residue is followed by a prolyl residue, the two may be released as an intact Xaa-Pro dipeptide.. Functionally, metallopeptidase that binds to the auxin transport inhibitor N-1-naphthylphthalamic acid (NPA). Required for embryonic and seedling development as well as cell cycle progression. Homodimerization is required to proper localization and activity. May play a negative role in the regulation of PIN auxin transport proteins. The sequence is that of Aminopeptidase M1 (APM1) from Arabidopsis thaliana (Mouse-ear cress).